A 479-amino-acid chain; its full sequence is Flavonol 3-O-glucosyltransferase UGT71C4 (479 aa).

The active-site Proton acceptor is His-17. His-17 provides a ligand contact to an anthocyanidin. Asp-127 (charge relay) is an active-site residue. Residues Thr-150, Ala-350, Gln-352, His-367, Trp-370, Asn-371, Ser-372, and Glu-375 each contribute to the UDP-alpha-D-glucose site. Ala-390 serves as a coordination point for an anthocyanidin. Glu-391 and Gln-392 together coordinate UDP-alpha-D-glucose.

Belongs to the UDP-glycosyltransferase family.

It catalyses the reaction a flavonol + UDP-alpha-D-glucose = a flavonol 3-O-beta-D-glucoside + UDP + H(+). The catalysed reaction is a 7-O-hydroxy-flavonol + UDP-alpha-D-glucose = a flavonol 7-O-beta-D-glucoside + UDP + H(+). Possesses quercetin 3-O-glucosyltransferase and 7-O-glucosyltransferase activities in vitro. Also active in vitro on benzoates and benzoate derivatives. This Arabidopsis thaliana (Mouse-ear cress) protein is Flavonol 3-O-glucosyltransferase UGT71C4.